The chain runs to 112 residues: SRA stem-loop-interacting RNA-binding protein, mitochondrial (112 aa).

Serine 15 carries the phosphoserine modification. Residues 19–98 (PIAFVRKIPW…IHVQAQRAKA (80 aa)) form the RRM domain. Threonine 104 is modified (phosphothreonine). The residue at position 105 (serine 105) is a Phosphoserine.

The protein localises to the mitochondrion. It is found in the nucleus. In terms of biological role, RNA-binding protein that acts as a nuclear receptor corepressor. Probably acts by binding the SRA RNA, and repressing the SRA-mediated nuclear receptor coactivation. Binds the STR7 loop of SRA RNA. Also able to repress glucocorticoid (GR), androgen (AR), thyroid (TR) and VDR-mediated transactivation. This Mus musculus (Mouse) protein is SRA stem-loop-interacting RNA-binding protein, mitochondrial (Slirp).